The primary structure comprises 101 residues: Urease subunit beta (101 aa).

Belongs to the urease beta subunit family. In terms of assembly, heterotrimer of UreA (gamma), UreB (beta) and UreC (alpha) subunits. Three heterotrimers associate to form the active enzyme.

It is found in the cytoplasm. It carries out the reaction urea + 2 H2O + H(+) = hydrogencarbonate + 2 NH4(+). It participates in nitrogen metabolism; urea degradation; CO(2) and NH(3) from urea (urease route): step 1/1. The chain is Urease subunit beta from Variovorax paradoxus (strain S110).